An 841-amino-acid polypeptide reads, in one-letter code: Alpha-glucuronidase A (841 aa).

The N-terminal stretch at 1–20 (MRGSNLFQLTLALLLSLVAA) is a signal peptide. N-linked (GlcNAc...) asparagine glycans are attached at residues Asn51, Asn76, Asn149, Asn222, Asn279, Asn310, Asn343, Asn450, Asn465, Asn527, Asn576, Asn682, Asn723, and Asn732.

This sequence belongs to the glycosyl hydrolase 67 family.

The protein localises to the secreted. The catalysed reaction is an alpha-D-glucuronoside + H2O = D-glucuronate + an alcohol. Alpha-glucuronidase involved in the hydrolysis of xylan, a major structural heterogeneous polysaccharide found in plant biomass representing the second most abundant polysaccharide in the biosphere, after cellulose. Releases 4-O-methylglucuronic acid from xylan. The chain is Alpha-glucuronidase A (aguA) from Aspergillus tubingensis.